Reading from the N-terminus, the 290-residue chain is Sodium/potassium-transporting ATPase subunit beta-2 (290 aa).

Residues 1 to 39 lie on the Cytoplasmic side of the membrane; it reads MVIQKEKKSCGQVVEEWKEFVWNPRTHQFMGRTGTSWAF. A helical; Signal-anchor for type II membrane protein membrane pass occupies residues 40–67; it reads ILLFYLVFYGFLTAMFSLTMWVMLQTVS. Topologically, residues 68–290 are extracellular; that stretch reads DHTPKYQDRL…VAFKLRINKT (223 aa). 2 N-linked (GlcNAc...) asparagine glycosylation sites follow: asparagine 96 and asparagine 118. Cysteines 129 and 150 form a disulfide. A glycan (N-linked (GlcNAc...) asparagine) is linked at asparagine 153. Cysteine 160 and cysteine 177 are joined by a disulfide. Asparagine 193, asparagine 197, asparagine 220, and asparagine 238 each carry an N-linked (GlcNAc...) asparagine glycan. Positions 193–290 are immunoglobulin-like; it reads NQSMNVTCVG…VAFKLRINKT (98 aa). A disulfide bridge links cysteine 200 with cysteine 261.

It belongs to the X(+)/potassium ATPases subunit beta family. In terms of assembly, the sodium/potassium-transporting ATPase is composed of a catalytic alpha subunit, an auxiliary non-catalytic beta subunit and an additional regulatory subunit. Interacts with isoform 2 of BSG.

It is found in the cell membrane. In terms of biological role, this is the non-catalytic component of the active enzyme, which catalyzes the hydrolysis of ATP coupled with the exchange of Na(+) and K(+) ions across the plasma membrane. The exact function of the beta-2 subunit is not known. Mediates cell adhesion of neurons and astrocytes, and promotes neurite outgrowth. The polypeptide is Sodium/potassium-transporting ATPase subunit beta-2 (Atp1b2) (Mus musculus (Mouse)).